Consider the following 2544-residue polypeptide: Highly reducing polyketide synthase pkhB (2544 aa).

In terms of domain architecture, Ketosynthase family 3 (KS3) spans 9–438; sequence SEPIAIIGMS…GTNAHVILES (430 aa). Catalysis depends on for beta-ketoacyl synthase activity residues Cys-182, His-317, and His-358. The malonyl-CoA:ACP transacylase (MAT) domain stretch occupies residues 566 to 876; it reads VFTGQVFRRS…PYWGCLVRDE (311 aa). The segment at 948-1082 is N-terminal hotdog fold; it reads HELLGMPVAG…GMVGIEESAV (135 aa). Positions 948 to 1252 are dehydratase (DH) domain; that stretch reads HELLGMPVAG…VELAALGRGS (305 aa). Positions 948–1254 constitute a PKS/mFAS DH domain; that stretch reads HELLGMPVAG…LAALGRGSSA (307 aa). His-980 functions as the Proton acceptor; for dehydratase activity in the catalytic mechanism. The interval 1095–1254 is C-terminal hotdog fold; sequence YTRQPNPQDL…LAALGRGSSA (160 aa). The active-site Proton donor; for dehydratase activity is Asp-1165. Residues 1398–1573 are methyltransferase (CMet) domain; that stretch reads SSLRQLSALL…FSGLDLEIYD (176 aa). Residues 1826–2142 are enoyl reductase (ER) domain; sequence GHLGTLAFAE…TGDQMGKVVL (317 aa). The interval 2169 to 2356 is ketoreductase (KR) domain; it reads ASYLIVGGVG…GVAIDLGPIS (188 aa). Positions 2462-2539 constitute a Carrier domain; it reads EGARLIGAAI…ALAGLVAEKS (78 aa). Position 2499 is an O-(pantetheine 4'-phosphoryl)serine (Ser-2499).

Pantetheine 4'-phosphate serves as cofactor.

It participates in secondary metabolite biosynthesis. Highly reducing polyketide synthase; part of the pkh gene cluster that mediates the biosynthesis of 2,4-dihydroxy-6-[(3E,5E,7E)-2-oxonona-3,5,7-trienyl]benzaldehyde. The highly reducing polyketide synthase pkhB first produces the (2E,4E,6E)-octa-2,4,6-trienyl strater unit for the non-reducing polyketide synthase pkhA. This octatrienoyl starter is then loaded onto the SAT domain of the NR-PKS pkhA to be condensed with 4 malonyl-CoA units to yield 2,4-dihydroxy-6-[(3E,5E,7E)-2-oxonona-3,5,7-trienyl]benzaldehyde. The chain is Highly reducing polyketide synthase pkhB from Emericella nidulans (strain FGSC A4 / ATCC 38163 / CBS 112.46 / NRRL 194 / M139) (Aspergillus nidulans).